A 515-amino-acid polypeptide reads, in one-letter code: Glucose-6-phosphate 1-dehydrogenase (515 aa).

Ala-2 carries the N-acetylalanine modification. Residue Ser-8 is modified to Phosphoserine. The residue at position 10 (Thr-10) is a Phosphothreonine. The residue at position 26 (Phe-26) is a Phosphoserine. NADP(+) is bound by residues 38–45 (GASGDLAK) and Arg-72. An N6-acetyllysine modification is found at Lys-89. NADP(+) is bound by residues Tyr-147 and Lys-171. Residues Lys-171, 201 to 205 (HYLGK), Glu-239, and Asp-258 contribute to the D-glucose 6-phosphate site. Lys-171 carries the N6-(2-hydroxyisobutyryl)lysine; alternate modification. The residue at position 171 (Lys-171) is an N6-acetyllysine; alternate. Catalysis depends on His-263, which acts as the Proton acceptor. Arg-357 is a binding site for NADP(+). Residues Lys-360 and Arg-365 each contribute to the D-glucose 6-phosphate site. NADP(+)-binding residues include Lys-366, Arg-370, and Arg-393. Gln-395 contacts D-glucose 6-phosphate. Residues 401–403 (YTK) and 421–423 (DLT) each bind NADP(+). Lys-403 carries the N6-acetyllysine modification. An N6-acetyllysine modification is found at Lys-432. Arg-487 contributes to the NADP(+) binding site. Lys-497 carries the post-translational modification N6-acetyllysine. NADP(+) is bound by residues Tyr-503 and Trp-509. Tyr-503 carries the phosphotyrosine modification.

The protein belongs to the glucose-6-phosphate dehydrogenase family. As to quaternary structure, homotetramer; dimer of dimers. Interacts with SIRT2; the interaction is enhanced by H(2)O(2) treatment. Forms a ternary complex with ALDOB and TP53; this interaction is direct. ALDOB stabilizes the complex inhibiting G6PD activity and keeping oxidative pentose phosphate metabolism in check. Post-translationally, acetylated by ELP3 at Lys-403; acetylation inhibits its homodimerization and enzyme activity. Deacetylated by SIRT2 at Lys-403; deacetylation stimulates its enzyme activity. Isoform Long is found in lymphoblasts, granulocytes and sperm.

The protein localises to the cytoplasm. Its subcellular location is the cytosol. It localises to the membrane. The catalysed reaction is D-glucose 6-phosphate + NADP(+) = 6-phospho-D-glucono-1,5-lactone + NADPH + H(+). Its pathway is carbohydrate degradation; pentose phosphate pathway; D-ribulose 5-phosphate from D-glucose 6-phosphate (oxidative stage): step 1/3. Catalyzes the rate-limiting step of the oxidative pentose-phosphate pathway, which represents a route for the dissimilation of carbohydrates besides glycolysis. The main function of this enzyme is to provide reducing power (NADPH) and pentose phosphates for fatty acid and nucleic acid synthesis. In Homo sapiens (Human), this protein is Glucose-6-phosphate 1-dehydrogenase (G6PD).